The following is a 451-amino-acid chain: Protoheme IX farnesyltransferase, mitochondrial (451 aa).

The next 6 helical transmembrane spans lie at 149–169 (TILV…PATV), 240–260 (PTVA…YTSL), 265–285 (IINT…GWAA), 289–309 (LTHP…FPHF), 339–359 (VALR…YFNI), and 414–434 (KAFF…ILHK).

It belongs to the UbiA prenyltransferase family.

The protein resides in the mitochondrion membrane. In terms of biological role, converts protoheme IX and farnesyl diphosphate to heme O. The sequence is that of Protoheme IX farnesyltransferase, mitochondrial (COX10) from Candida glabrata (strain ATCC 2001 / BCRC 20586 / JCM 3761 / NBRC 0622 / NRRL Y-65 / CBS 138) (Yeast).